The sequence spans 476 residues: Doublesex- and mab-3-related transcription factor 3 (476 aa).

Positions 29-76 (CARCRNHGVLSWLKGHKRYCRFKDCTCEKCILIIERQRVMAAQVALRR) form a DNA-binding region, DM. Disordered stretches follow at residues 89–130 (DSLR…RPTA) and 147–195 (GTLP…SKNC). A compositionally biased stretch (low complexity) spans 102 to 121 (DAAATAATASQSSPASQASQ). Over residues 165–174 (DSSSTDNTAE) the composition is skewed to polar residues. A compositionally biased stretch (basic and acidic residues) spans 176 to 185 (FSDKDTDQRS). Residues 255-290 (RPPLEVLKKIFPNQKPTVLELILKGCGGDLVSAVEV) enclose the DMA domain. Residues 418 to 432 (NSTSVFRSSPVLSSR) show a composition bias toward polar residues. Residues 418-476 (NSTSVFRSSPVLSSRTTEDPRISIPDDGCPIVTKQSIYTEDDYDERSDSSDSRILNTSS) are disordered.

It belongs to the DMRT family. As to expression, expressed in the ventral spinal cord, in a restrical population of neurons migrating ventrically in the developing spinal cord at 11.5 dpc.

It localises to the nucleus. Probable transcription factor that plays a role in configuring the spinal circuits controlling stride in vertebrates. Involved in neuronal specification within specific subdivision of spinal cord neurons and in the development of a coordinated locomotor network controlling limb movements. May regulate transcription during sexual development. The protein is Doublesex- and mab-3-related transcription factor 3 (Dmrt3) of Mus musculus (Mouse).